The chain runs to 310 residues: Methionyl-tRNA formyltransferase (310 aa).

Position 111–114 (111–114 (SLLP)) interacts with (6S)-5,6,7,8-tetrahydrofolate.

This sequence belongs to the Fmt family.

The enzyme catalyses L-methionyl-tRNA(fMet) + (6R)-10-formyltetrahydrofolate = N-formyl-L-methionyl-tRNA(fMet) + (6S)-5,6,7,8-tetrahydrofolate + H(+). Its function is as follows. Attaches a formyl group to the free amino group of methionyl-tRNA(fMet). The formyl group appears to play a dual role in the initiator identity of N-formylmethionyl-tRNA by promoting its recognition by IF2 and preventing the misappropriation of this tRNA by the elongation apparatus. This chain is Methionyl-tRNA formyltransferase, found in Rhodopseudomonas palustris (strain TIE-1).